We begin with the raw amino-acid sequence, 638 residues long: Chaperone protein DnaK (638 aa).

Phosphothreonine; by autocatalysis is present on Thr-196. Residues 592-638 (ASNLYQQPGAEAGAAPQPETNGQQESKGGDGAVNAEYEVIDGDDDKK) are disordered. Over residues 597–610 (QQPGAEAGAAPQPE) the composition is skewed to low complexity. The segment covering 629 to 638 (EVIDGDDDKK) has biased composition (acidic residues).

The protein belongs to the heat shock protein 70 family.

Acts as a chaperone. The polypeptide is Chaperone protein DnaK (Chlorobaculum parvum (strain DSM 263 / NCIMB 8327) (Chlorobium vibrioforme subsp. thiosulfatophilum)).